We begin with the raw amino-acid sequence, 356 residues long: Phenylalanine--tRNA ligase alpha subunit (356 aa).

Residue Glu-260 participates in Mg(2+) binding.

The protein belongs to the class-II aminoacyl-tRNA synthetase family. Phe-tRNA synthetase alpha subunit type 1 subfamily. In terms of assembly, tetramer of two alpha and two beta subunits. It depends on Mg(2+) as a cofactor.

Its subcellular location is the cytoplasm. The enzyme catalyses tRNA(Phe) + L-phenylalanine + ATP = L-phenylalanyl-tRNA(Phe) + AMP + diphosphate + H(+). This Gluconobacter oxydans (strain 621H) (Gluconobacter suboxydans) protein is Phenylalanine--tRNA ligase alpha subunit.